The primary structure comprises 505 residues: TBC1 domain family member 22B (505 aa).

A2 carries the N-acetylalanine modification. 2 positions are modified to phosphoserine: S58 and S116. Positions 105–146 (SKLRVKPERSQSTTSDVPANYKVIKSSSDAQLSRNSSDTCLR) are disordered. The segment covering 129 to 146 (KSSSDAQLSRNSSDTCLR) has biased composition (polar residues). S154 bears the Phosphoserine mark. The Rab-GAP TBC domain occupies 210–434 (GVPREVRPIT…RLWDTYQSEP (225 aa)).

As to quaternary structure, interacts with ACBD3 and ARFGEF1. Interacts with YWHAB, YWHAE, YWHAG, YWHAH, YWHAQ and YWHAZ.

Its function is as follows. May act as a GTPase-activating protein for Rab family protein(s). The chain is TBC1 domain family member 22B (TBC1D22B) from Homo sapiens (Human).